We begin with the raw amino-acid sequence, 232 residues long: Expansin-YoaJ (232 aa).

The N-terminal stretch at 1 to 25 is a signal peptide; sequence MKKIMSAFVGMVLLTIFCFSPQASA. The Expansin-like EG45 domain occupies 58 to 127; that stretch reads ITAINPADLN…MKDGKINIKW (70 aa).

The protein resides in the secreted. The protein localises to the cell wall. May promote colonization of plant roots. May cause loosening and extension of plant cell walls by disrupting non-covalent bonding between cellulose microfibrils and matrix glucans. Has very low expansin activity (in vitro). No enzymatic activity has been found. Binds to peptidoglycan and to plant cell walls. This chain is Expansin-YoaJ (yoaJ), found in Bacillus subtilis (strain 168).